We begin with the raw amino-acid sequence, 231 residues long: Cytochrome c oxidase subunit 2 (231 aa).

Over 1–14 (MAHPAQLGLQNATS) the chain is Mitochondrial intermembrane. Residues 15-45 (PIMEELIAFHDHALMIIFLISSLVLYVISLM) traverse the membrane as a helical segment. Residues 46-59 (LTTKLTHTSTMNAQ) lie on the Mitochondrial matrix side of the membrane. The chain crosses the membrane as a helical span at residues 60–87 (EIEMIWTILPAIILIMIALPSLRILYMT). Topologically, residues 88–231 (DEFNKPYLTL…WASYLYIVSL (144 aa)) are mitochondrial intermembrane. Cu cation is bound by residues H161, C196, E198, C200, H204, and M207. A Mg(2+)-binding site is contributed by E198.

The protein belongs to the cytochrome c oxidase subunit 2 family. As to quaternary structure, component of the cytochrome c oxidase (complex IV, CIV), a multisubunit enzyme composed of 14 subunits. The complex is composed of a catalytic core of 3 subunits MT-CO1, MT-CO2 and MT-CO3, encoded in the mitochondrial DNA, and 11 supernumerary subunits COX4I, COX5A, COX5B, COX6A, COX6B, COX6C, COX7A, COX7B, COX7C, COX8 and NDUFA4, which are encoded in the nuclear genome. The complex exists as a monomer or a dimer and forms supercomplexes (SCs) in the inner mitochondrial membrane with NADH-ubiquinone oxidoreductase (complex I, CI) and ubiquinol-cytochrome c oxidoreductase (cytochrome b-c1 complex, complex III, CIII), resulting in different assemblies (supercomplex SCI(1)III(2)IV(1) and megacomplex MCI(2)III(2)IV(2)). Found in a complex with TMEM177, COA6, COX18, COX20, SCO1 and SCO2. Interacts with TMEM177 in a COX20-dependent manner. Interacts with COX20. Interacts with COX16. The cofactor is Cu cation.

The protein resides in the mitochondrion inner membrane. The catalysed reaction is 4 Fe(II)-[cytochrome c] + O2 + 8 H(+)(in) = 4 Fe(III)-[cytochrome c] + 2 H2O + 4 H(+)(out). Component of the cytochrome c oxidase, the last enzyme in the mitochondrial electron transport chain which drives oxidative phosphorylation. The respiratory chain contains 3 multisubunit complexes succinate dehydrogenase (complex II, CII), ubiquinol-cytochrome c oxidoreductase (cytochrome b-c1 complex, complex III, CIII) and cytochrome c oxidase (complex IV, CIV), that cooperate to transfer electrons derived from NADH and succinate to molecular oxygen, creating an electrochemical gradient over the inner membrane that drives transmembrane transport and the ATP synthase. Cytochrome c oxidase is the component of the respiratory chain that catalyzes the reduction of oxygen to water. Electrons originating from reduced cytochrome c in the intermembrane space (IMS) are transferred via the dinuclear copper A center (CU(A)) of subunit 2 and heme A of subunit 1 to the active site in subunit 1, a binuclear center (BNC) formed by heme A3 and copper B (CU(B)). The BNC reduces molecular oxygen to 2 water molecules using 4 electrons from cytochrome c in the IMS and 4 protons from the mitochondrial matrix. This chain is Cytochrome c oxidase subunit 2 (MT-CO2), found in Alouatta palliata (Mantled howler monkey).